Consider the following 1269-residue polypeptide: Protein flightless-1 homolog (1269 aa).

N-acetylmethionine is present on methionine 1. The segment at 1–427 (MEATGVLPFV…SGPKDPMARK (427 aa)) is interaction with LRRFIP1 and LRRFIP2. LRR repeat units lie at residues 7–32 (LPFV…VKAM), 33–55 (TSLR…LAAL), 56–78 (QKLE…LSSL), 80–103 (SLRA…IFKL), 104–126 (DDLS…LENA), 127–149 (KNML…LFIN), 150–173 (LTDL…MRRL), 175–196 (HLQT…QLPA), 197–222 (MTAL…LEGL), 223–245 (SNLA…LYTL), 247–268 (SLRR…IDQW), 269–291 (VHVE…ICKL), 293–316 (KLKK…IGKL), 318–339 (NLEE…LCRC), 340–363 (PKLR…HFLT), and 365–385 (IEVL…PADR). Position 21 is an N6-acetyllysine (lysine 21). Serine 406 is modified (phosphoserine). A Phosphoserine; by SGK3 modification is found at serine 436. The tract at residues 452-473 (VAQEKNKKQEESADARAPSGKV) is disordered. The span at 453 to 465 (AQEKNKKQEESAD) shows a compositional bias: basic and acidic residues. Residues 495–827 (VGQLPGLTIW…TVSRSLEGTE (333 aa)) form an interaction with ACTL6A region. Gelsolin-like repeat units follow at residues 509 to 591 (FVPV…EEFL), 629 to 703 (NIKL…PEFW), and 758 to 831 (ELMP…AQVF). Position 818 is a phosphothreonine; by SGK3 (threonine 818). Residues serine 856 and serine 860 each carry the phosphoserine modification. The tract at residues 951–975 (KKEDKEEKAEGKEGEEATAEAEEKQ) is disordered. The span at 952-965 (KEDKEEKAEGKEGE) shows a compositional bias: basic and acidic residues. Acidic residues predominate over residues 966–975 (EATAEAEEKQ). Gelsolin-like repeat units follow at residues 1075 to 1143 (TDSS…PENF) and 1181 to 1254 (KCSD…QHAF).

Interacts with actin, ACTL6A, NCOA2 and CARM1. Interacts with LRRFIP1, LRRFIP2 and MYD88. Upon LPS stimulation, LRRFIP2 competes for MYD88-binding. LRRFIP1 constitutively blocks the interaction with MyD88, even in the absence of LPS. Interacts with the nuclear receptors ESR1 and THRB. Interacts with SGK3. Interacts (via the gelsolin-like region) with TMOD1. Interacts with (via the gelsolin-like region) TMOD3. Interacts with LMOD2, VCL, GSN and DES. In terms of tissue distribution, strongest expression in skeletal muscle with high expression also in the heart and lung.

Its subcellular location is the nucleus. The protein resides in the cytoplasm. It localises to the cytoskeleton. The protein localises to the microtubule organizing center. It is found in the centrosome. Its subcellular location is the cell projection. The protein resides in the podosome. It localises to the cell junction. The protein localises to the focal adhesion. Is a regulator of actin polymerization, required for proper myofibril organization and regulation of the length of sarcomeric thin filaments. It also plays a role in the assembly of cardiomyocyte cell adhesion complexes. Regulates cytoskeletal rearrangements involved in cytokinesis and cell migration, by inhibiting Rac1-dependent paxillin phosphorylation. May play a role as coactivator in transcriptional activation by hormone-activated nuclear receptors (NR) and acts in cooperation with NCOA2 and CARM1. Involved in estrogen hormone signaling. The protein is Protein flightless-1 homolog (FLII) of Homo sapiens (Human).